A 259-amino-acid chain; its full sequence is Phosphate import ATP-binding protein PstB (259 aa).

The 244-residue stretch at 11–254 (AESKNLNFYY…PDNPRTEDYI (244 aa)) folds into the ABC transporter domain. Residue 43 to 50 (GPSGCGKS) participates in ATP binding.

It belongs to the ABC transporter superfamily. Phosphate importer (TC 3.A.1.7) family. As to quaternary structure, the complex is composed of two ATP-binding proteins (PstB), two transmembrane proteins (PstC and PstA) and a solute-binding protein (PstS).

It localises to the cell inner membrane. It catalyses the reaction phosphate(out) + ATP + H2O = ADP + 2 phosphate(in) + H(+). In terms of biological role, part of the ABC transporter complex PstSACB involved in phosphate import. Responsible for energy coupling to the transport system. The polypeptide is Phosphate import ATP-binding protein PstB (Geobacter sulfurreducens (strain ATCC 51573 / DSM 12127 / PCA)).